The following is a 274-amino-acid chain: NH(3)-dependent NAD(+) synthetase (274 aa).

46 to 53 (GISGGQDS) is an ATP binding site. Mg(2+) is bound at residue aspartate 52. Arginine 140 serves as a coordination point for deamido-NAD(+). Residue threonine 160 participates in ATP binding. Glutamate 165 contributes to the Mg(2+) binding site. Residues lysine 173 and aspartate 180 each contribute to the deamido-NAD(+) site. The ATP site is built by lysine 189 and threonine 211. Position 260–261 (260–261 (HK)) interacts with deamido-NAD(+).

It belongs to the NAD synthetase family. Homodimer.

It carries out the reaction deamido-NAD(+) + NH4(+) + ATP = AMP + diphosphate + NAD(+) + H(+). It participates in cofactor biosynthesis; NAD(+) biosynthesis; NAD(+) from deamido-NAD(+) (ammonia route): step 1/1. Its function is as follows. Catalyzes the ATP-dependent amidation of deamido-NAD to form NAD. Uses ammonia as a nitrogen source. The chain is NH(3)-dependent NAD(+) synthetase from Lysinibacillus sphaericus (strain C3-41).